Consider the following 261-residue polypeptide: Pyrroline-5-carboxylate reductase (261 aa).

It belongs to the pyrroline-5-carboxylate reductase family.

The protein resides in the cytoplasm. It carries out the reaction L-proline + NADP(+) = (S)-1-pyrroline-5-carboxylate + NADPH + 2 H(+). The catalysed reaction is L-proline + NAD(+) = (S)-1-pyrroline-5-carboxylate + NADH + 2 H(+). Its pathway is amino-acid biosynthesis; L-proline biosynthesis; L-proline from L-glutamate 5-semialdehyde: step 1/1. Its function is as follows. Catalyzes the reduction of 1-pyrroline-5-carboxylate (PCA) to L-proline. This Thermus thermophilus (strain ATCC BAA-163 / DSM 7039 / HB27) protein is Pyrroline-5-carboxylate reductase.